Reading from the N-terminus, the 200-residue chain is Large ribosomal subunit protein uL4 (200 aa).

The segment at 43–70 (RAQKTRAEVSGSGKKPWRQKGTGRARSG) is disordered.

The protein belongs to the universal ribosomal protein uL4 family. In terms of assembly, part of the 50S ribosomal subunit.

One of the primary rRNA binding proteins, this protein initially binds near the 5'-end of the 23S rRNA. It is important during the early stages of 50S assembly. It makes multiple contacts with different domains of the 23S rRNA in the assembled 50S subunit and ribosome. In terms of biological role, forms part of the polypeptide exit tunnel. In Glaesserella parasuis serovar 5 (strain SH0165) (Haemophilus parasuis), this protein is Large ribosomal subunit protein uL4.